A 335-amino-acid chain; its full sequence is Glycerol-3-phosphate dehydrogenase [NAD(P)+] (335 aa).

NADPH contacts are provided by Ser-12, Trp-13, His-33, Arg-34, and Lys-108. Sn-glycerol 3-phosphate contacts are provided by Lys-108, Gly-137, and Thr-139. Ala-141 is an NADPH binding site. Residues Lys-192, Asp-245, Ser-255, Arg-256, and Asn-257 each coordinate sn-glycerol 3-phosphate. The active-site Proton acceptor is Lys-192. Arg-256 serves as a coordination point for NADPH. Residue Glu-282 coordinates NADPH.

The protein belongs to the NAD-dependent glycerol-3-phosphate dehydrogenase family.

The protein localises to the cytoplasm. The catalysed reaction is sn-glycerol 3-phosphate + NAD(+) = dihydroxyacetone phosphate + NADH + H(+). It carries out the reaction sn-glycerol 3-phosphate + NADP(+) = dihydroxyacetone phosphate + NADPH + H(+). The protein operates within membrane lipid metabolism; glycerophospholipid metabolism. Functionally, catalyzes the reduction of the glycolytic intermediate dihydroxyacetone phosphate (DHAP) to sn-glycerol 3-phosphate (G3P), the key precursor for phospholipid synthesis. The polypeptide is Glycerol-3-phosphate dehydrogenase [NAD(P)+] (Methylococcus capsulatus (strain ATCC 33009 / NCIMB 11132 / Bath)).